The primary structure comprises 408 residues: Type II methyltransferase M.VspI (408 aa).

The protein belongs to the N(4)/N(6)-methyltransferase family.

The catalysed reaction is a 2'-deoxyadenosine in DNA + S-adenosyl-L-methionine = an N(6)-methyl-2'-deoxyadenosine in DNA + S-adenosyl-L-homocysteine + H(+). In terms of biological role, a gamma subtype methylase, recognizes the double-stranded sequence 5'-ATTAAT-3', methylates A-5 on both strands, and protects the DNA from cleavage by the VspI endonuclease. The polypeptide is Type II methyltransferase M.VspI (Vibrio sp. (strain 343)).